Here is a 146-residue protein sequence, read N- to C-terminus: Hemoglobin subunit beta (146 aa).

Val-1 is modified (N-acetylvaline). The Globin domain maps to 2-146 (NLTAAEKTQV…VANALAHKYH (145 aa)). Thr-12 bears the Phosphothreonine mark. Lys-59 carries the post-translational modification N6-acetyllysine. A heme b-binding site is contributed by His-63. N6-acetyllysine is present on Lys-82. A heme b-binding site is contributed by His-92. The residue at position 93 (Cys-93) is an S-nitrosocysteine. An N6-acetyllysine modification is found at Lys-144.

Belongs to the globin family. Heterotetramer of two alpha chains and two beta chains. Red blood cells.

Its function is as follows. Involved in oxygen transport from the lung to the various peripheral tissues. The polypeptide is Hemoglobin subunit beta (HBB) (Loxodonta africana (African elephant)).